The chain runs to 216 residues: Large ribosomal subunit protein uL3 (216 aa).

Residues 137-158 (GASHGAHKNHRKPGSIGGASTP) are disordered.

The protein belongs to the universal ribosomal protein uL3 family. In terms of assembly, part of the 50S ribosomal subunit. Forms a cluster with proteins L14 and L19.

Functionally, one of the primary rRNA binding proteins, it binds directly near the 3'-end of the 23S rRNA, where it nucleates assembly of the 50S subunit. This chain is Large ribosomal subunit protein uL3, found in Arthrobacter sp. (strain FB24).